The chain runs to 1331 residues: X-linked retinitis pigmentosa GTPase regulator-interacting protein 1 (1331 aa).

3 disordered regions span residues 1–165, 183–220, and 351–374; these read MQHL…PPAF, SQLT…SEEC, and HQPL…LPPQ. Basic and acidic residues predominate over residues 41-67; it reads NQKELNCRRLHLHEEPTLVKEPSPKQR. Composition is skewed to polar residues over residues 77 to 86 and 183 to 193; these read VQRSTTTQPD and SQLTHTMTTDS. The span at 194–220 shows a compositional bias: basic and acidic residues; sequence THVEEIPRSPEKTSKVEKPEQRSSEEC. Coiled-coil stretches lie at residues 236-352 and 498-546; these read ELIR…SSHQ and MCYQ…LRSH. The span at 351-367 shows a compositional bias: polar residues; it reads HQPLDSSHQPHWSTELT. Residues 745 to 870 form the C2 domain; that stretch reads GARKVQSNES…AQNKSIKGDF (126 aa). Disordered stretches follow at residues 899-1057 and 1088-1146; these read FQMS…VQDK and AEDG…SDDI. Residues 908–999 are a coiled coil; the sequence is EGEEKEEEGG…DVLEASFTEE (92 aa). The span at 910 to 988 shows a compositional bias: acidic residues; the sequence is EEKEEEGGEE…EEEEEEEDEN (79 aa). Composition is skewed to basic and acidic residues over residues 1022-1039 and 1088-1115; these read PEKR…REHQ and AEDG…EHPS. The span at 1129–1141 shows a compositional bias: polar residues; sequence CEQASEVSETQTT. Residues 1136 to 1326 form an interaction with RPGR region; the sequence is SETQTTDSDD…ALHGIYKEMT (191 aa).

The protein belongs to the RPGRIP1 family. Interacts with NPHP4. Interacts with NEK4. Forms homodimers and elongated homopolymers. Interacts with RPGR. Interacts with SPATA7. Interacts with CEP290/NPHP6; mediating the association between RPGR and CEP290/NPHP6. In terms of tissue distribution, expressed in the retina (at protein level).

The protein localises to the cell projection. It is found in the cilium. Its function is as follows. May function as scaffolding protein. Required for normal location of RPGR at the connecting cilium of photoreceptor cells. Required for normal disk morphogenesis and disk organization in the outer segment of photoreceptor cells and for survival of photoreceptor cells. In Mus musculus (Mouse), this protein is X-linked retinitis pigmentosa GTPase regulator-interacting protein 1 (Rpgrip1).